The primary structure comprises 288 residues: Fe-S cluster assembly protein dre2 (288 aa).

An N-terminal SAM-like domain region spans residues 1-127 (MSSSVLVLTS…LSRPNQVEAV (127 aa)). A linker region spans residues 128-177 (PIKLSNKNGQSASKNKILDFLKSDKENLISGDDDQELIDEDELLDESAHD). [2Fe-2S] cluster is bound by residues Cys-185, Cys-196, Cys-199, and Cys-201. The interval 185–201 (CKPEPGKKKRACKNCTC) is fe-S binding site A. [4Fe-4S] cluster is bound by residues Cys-244, Cys-247, Cys-255, and Cys-258. 2 consecutive short sequence motifs (cx2C motif) follow at residues 244–247 (CGNC) and 255–258 (CSGC). A fe-S binding site B region spans residues 244–258 (CGNCYLGDAFRCSGC).

It belongs to the anamorsin family. As to quaternary structure, monomer. Interacts with tah18. Interacts with tim40. [2Fe-2S] cluster is required as a cofactor. The cofactor is [4Fe-4S] cluster.

It localises to the cytoplasm. The protein localises to the mitochondrion intermembrane space. In terms of biological role, component of the cytosolic iron-sulfur (Fe-S) protein assembly (CIA) machinery required for the maturation of extramitochondrial Fe-S proteins. Part of an electron transfer chain functioning in an early step of cytosolic Fe-S biogenesis, facilitating the de novo assembly of a [4Fe-4S] cluster on the scaffold complex cfd1-nbp35. Electrons are transferred to dre2 from NADPH via the FAD- and FMN-containing protein tah18. Tah18-dre2 are also required for the assembly of the diferric tyrosyl radical cofactor of ribonucleotide reductase (RNR), probably by providing electrons for reduction during radical cofactor maturation in the catalytic small subunit suc22. The polypeptide is Fe-S cluster assembly protein dre2 (Schizosaccharomyces pombe (strain 972 / ATCC 24843) (Fission yeast)).